The following is a 134-amino-acid chain: Thyrotropin subunit beta (134 aa).

A signal peptide spans 1–16 (MSPFFMMSLLFGLTFG). 6 disulfide bridges follow: Cys22/Cys72, Cys36/Cys87, Cys39/Cys125, Cys47/Cys103, Cys51/Cys105, and Cys108/Cys115. Asn43 carries N-linked (GlcNAc...) asparagine glycosylation.

Belongs to the glycoprotein hormones subunit beta family. Heterodimer of a common alpha chain and a unique beta chain which confers biological specificity to thyrotropin, lutropin, follitropin and gonadotropin.

Its subcellular location is the secreted. In terms of biological role, indispensable for the control of thyroid structure and metabolism. The protein is Thyrotropin subunit beta (TSHB) of Gallus gallus (Chicken).